The sequence spans 351 residues: Uroporphyrinogen decarboxylase (351 aa).

Substrate is bound by residues 25-29, phenylalanine 43, aspartate 74, tyrosine 151, serine 206, and histidine 325; that span reads RQAGR.

This sequence belongs to the uroporphyrinogen decarboxylase family. In terms of assembly, homodimer.

It is found in the cytoplasm. It carries out the reaction uroporphyrinogen III + 4 H(+) = coproporphyrinogen III + 4 CO2. The protein operates within porphyrin-containing compound metabolism; protoporphyrin-IX biosynthesis; coproporphyrinogen-III from 5-aminolevulinate: step 4/4. Catalyzes the decarboxylation of four acetate groups of uroporphyrinogen-III to yield coproporphyrinogen-III. In Chlorobaculum tepidum (strain ATCC 49652 / DSM 12025 / NBRC 103806 / TLS) (Chlorobium tepidum), this protein is Uroporphyrinogen decarboxylase.